The following is a 315-amino-acid chain: WD repeat domain-containing protein 83 (315 aa).

WD repeat units lie at residues C23–T62, G65–K104, G107–V146, E151–D188, V190–E228, G231–A272, and V275–G313.

It belongs to the WD repeat MORG1 family. Interacts with EGLN3/PHD3. Interacts with ERK signaling proteins MAP2K1/MEK1, MAP2K2/MEK2, LAMTOR3, ARAF/Raf-1, MAPK1/ERK2 and MAPK3/ERK1. Identified in the spliceosome C complex. Interacts with PARD6B and CRB3. Interacts strongly with GTP-bound RRAGA but not with inactive GDP-bound. Interacts with p62/SQSTM1.

The protein resides in the cytoplasm. It is found in the lysosome. The protein localises to the nucleus. Functionally, molecular scaffold protein for various multimeric protein complexes. Acts as a module in the assembly of a multicomponent scaffold for the ERK pathway, linking ERK responses to specific agonists. At low concentrations it enhances ERK activation, whereas high concentrations lead to the inhibition of ERK activation. Also involved in response to hypoxia by acting as a negative regulator of HIF1A/HIF-1-alpha via its interaction with EGLN3/PHD3. May promote degradation of HIF1A. May act by recruiting signaling complexes to a specific upstream activator. May also be involved in pre-mRNA splicing. Participates in tight junction development by regulating apico-basal polarity, a key step in tissue development and organization. Mechanistically, regulates the translocation of PAR6-aPKC from the cytoplasm to the apical surface by acting as an adapter between PARD6B AND CRB3. Also acts as a negative regulator of mTORC1 under nutrient-rich conditions by binding to the active Rag GTPases to inhibit mTORC1 localization to the lysosome and phosphorylation of downstream targets. This facilitates constitutive basal autophagy during nutrient availability. The protein is WD repeat domain-containing protein 83 (WDR83) of Homo sapiens (Human).